A 205-amino-acid chain; its full sequence is Protein N-terminal glutamine amidohydrolase (205 aa).

Residues cysteine 20, histidine 74, and aspartate 90 contribute to the active site.

The protein belongs to the NTAQ1 family. As to quaternary structure, monomer.

The catalysed reaction is N-terminal L-glutaminyl-[protein] + H2O = N-terminal L-glutamyl-[protein] + NH4(+). In terms of biological role, mediates the side-chain deamidation of N-terminal glutamine residues to glutamate, an important step in N-end rule pathway of protein degradation. Conversion of the resulting N-terminal glutamine to glutamate renders the protein susceptible to arginylation, polyubiquitination and degradation as specified by the N-end rule. Does not act on substrates with internal or C-terminal glutamine and does not act on non-glutamine residues in any position. This chain is Protein N-terminal glutamine amidohydrolase (tun), found in Drosophila virilis (Fruit fly).